Here is a 473-residue protein sequence, read N- to C-terminus: Peptidoglycan DL-endopeptidase CwlO (473 aa).

An N-terminal signal peptide occupies residues 1–30; the sequence is MRKSLITLGLASVIGTSSFLIPFTSKTASA. 3 disordered regions span residues 31-52, 79-98, and 237-337; these read ETLD…SSIE, ALDT…KTKE, and EASE…GTVI. A compositionally biased stretch (basic and acidic residues) spans 33 to 44; sequence LDEKKQKIESKQ. Polar residues predominate over residues 241–250; it reads LANQKANTEA. Basic and acidic residues-rich tracts occupy residues 251-260 and 267-277; these read EQARIKKEQE and KKQEEAQKASD. Low complexity predominate over residues 291-337; it reads SSKASSSDDSSDNSSDNSSNGSSNSSSNGSSSKKSSGSNSNSGGTVI. The region spanning 340 to 471 is the NlpC/P60 domain; the sequence is SGGIEGAISV…AAFKGVVRRV (132 aa). The Nucleophile role is filled by Cys377. His431 serves as the catalytic Proton acceptor. Asn443 is an active-site residue.

The protein belongs to the peptidase C40 family. Identified in the extracellular proteome as a number of processing products of about 50 and 30 kDa.

The protein resides in the secreted. Its subcellular location is the cell wall. With respect to regulation, detected in exponentially growing cells, the 50 and 30 kDa processing products disappear upon entry into stationary phase with the concomitant appearance of a 20 kDa products. The 50 kDa form persists in the absence of extracellular proteases. The C-terminal part of CwlO shows a cell wall hydrolytic DL-endopeptidase activity. This chain is Peptidoglycan DL-endopeptidase CwlO (cwlO), found in Bacillus subtilis (strain 168).